The primary structure comprises 320 residues: Olfactory receptor 12D1 (320 aa).

Topologically, residues 1 to 23 (MLNTTSVTEFLLLGVTDIQELQP) are extracellular. Asn3 carries N-linked (GlcNAc...) asparagine glycosylation. Residues 24–44 (FLFVVFLTIYFISVAGNGAIL) form a helical membrane-spanning segment. Over 45 to 55 (MIVISDPRLHS) the chain is Cytoplasmic. The helical transmembrane segment at 56 to 76 (PMYFFLGNLSCLDICYSSVTL) threads the bilayer. Topologically, residues 77-97 (PKMLQNFLSAHKAISFLGCIS) are extracellular. A disulfide bridge connects residues Cys95 and Cys177. A helical membrane pass occupies residues 98–118 (QLHFFHFLGSTEAMLLAVMAF). Residues 119 to 141 (DRFVAICKPLRYTVIMNPQLCTQ) are Cytoplasmic-facing. A helical transmembrane segment spans residues 142–162 (MAITIWMIGFFHALLHSLMTS). The Extracellular portion of the chain corresponds to 163–203 (RLNFCGSNRIYHFFCDVKPLLKLACGNTELNQWLLSTVTGT). The helical transmembrane segment at 204–224 (IAMGPFFLTLLSYFYIITHLF) threads the bilayer. Topologically, residues 225 to 238 (FKTHSFSMLRKALS) are cytoplasmic. A helical membrane pass occupies residues 239–259 (TCASHFMVVILLYAPVLFTYI). Residues 260–270 (HHASGTSMDQD) are Extracellular-facing. Residues 271–291 (RITAIMYTVVTPVLNPLIYTL) form a helical membrane-spanning segment. Over 292–320 (RNKEVKGAFNRAMKRWLWPKEILKNSSEA) the chain is Cytoplasmic.

The protein belongs to the G-protein coupled receptor 1 family.

It localises to the cell membrane. In terms of biological role, odorant receptor. The protein is Olfactory receptor 12D1 (OR12D1) of Homo sapiens (Human).